We begin with the raw amino-acid sequence, 220 residues long: Ras-related protein Rab-3A (220 aa).

Ser31, Ser32, Val33, Gly34, Lys35, Thr36, Ser37, Thr48, Pro49, Ser53, and Thr54 together coordinate GTP. Mg(2+) is bound at residue Thr36. A Switch 1 motif is present at residues Pro49–Asp58. Mg(2+) is bound by residues Thr54 and Asp77. Gly80 is a GTP binding site. Positions Gly80–Met96 match the Switch 2 motif. A Phosphothreonine modification is found at Thr86. Asn135, Lys136, Asp138, Ala166, and Lys167 together coordinate GTP. Ser188 and Ser190 each carry phosphoserine. The tract at residues Ala194 to Cys220 is disordered. S-geranylgeranyl cysteine attachment occurs at residues Cys218 and Cys220. Cys220 carries the post-translational modification Cysteine methyl ester.

Belongs to the small GTPase superfamily. Rab family. Interacts with RIMS1 and RIMS2. Interacts with Rabphilin-3A/RPH3A and Rab effector Noc2/RPH3AL. Interacts with SYTL4. Interacts with RAB3IP. Interacts with SGSM1 and SGSM3. Interacts with SYT1. Interacts with MYH9; this interaction is essential for lysosome exocytosis and plasma membrane repair. Interacts with STXBP1; this interaction promotes RAB3A dissociation from the vesicle membrane. Interacts with SNCA. Interacts with GDI1, GDI2, CHM and CHML; phosphorylation at Thr-86 disrupts these interactions. Interacts with MADD (via uDENN domain); the GTP-bound form is preferred for interaction. Requires Mg(2+) as cofactor. Phosphorylation of Thr-86 in the switch II region by LRRK2 prevents the association of RAB regulatory proteins, including CHM, CHML and RAB GDP dissociation inhibitors GDI1 and GDI2. Specifically expressed in brain.

It is found in the cytoplasm. The protein localises to the cytosol. Its subcellular location is the lysosome. The protein resides in the cytoplasmic vesicle. It localises to the secretory vesicle. It is found in the cell projection. The protein localises to the axon. Its subcellular location is the cell membrane. The protein resides in the presynapse. It localises to the postsynapse. It carries out the reaction GTP + H2O = GDP + phosphate + H(+). With respect to regulation, regulated by guanine nucleotide exchange factors (GEFs) including RAB3IL1 and MADD which promote the exchange of bound GDP for free GTP. Regulated by GTPase activating proteins (GAPs) including RAB3GAP1 and TBC1D10B which increase the GTP hydrolysis activity. Inhibited by GDP dissociation inhibitors (GDIs) which prevent Rab-GDP dissociation. The small GTPases Rab are key regulators of intracellular membrane trafficking, from the formation of transport vesicles to their fusion with membranes. Rabs cycle between an inactive GDP-bound form and an active GTP-bound form that is able to recruit to membranes different sets of downstream effectors directly responsible for vesicle formation, movement, tethering and fusion. RAB3A plays a central role in regulated exocytosis and secretion. Controls the recruitment, tethering and docking of secretory vesicles to the plasma membrane. Upon stimulation, switches to its active GTP-bound form, cycles to vesicles and recruits effectors such as RIMS1, RIMS2, Rabphilin-3A/RPH3A, RPH3AL or SYTL4 to help the docking of vesicules onto the plasma membrane. Upon GTP hydrolysis by GTPase-activating protein, dissociates from the vesicle membrane allowing the exocytosis to proceed. Stimulates insulin secretion through interaction with RIMS2 or RPH3AL effectors in pancreatic beta cells. Regulates calcium-dependent lysosome exocytosis and plasma membrane repair (PMR) via the interaction with 2 effectors, SYTL4 and myosin-9/MYH9. Acts as a positive regulator of acrosome content secretion in sperm cells by interacting with RIMS1. Also plays a role in the regulation of dopamine release by interacting with synaptotagmin I/SYT. The chain is Ras-related protein Rab-3A (RAB3A) from Bos taurus (Bovine).